The following is a 626-amino-acid chain: Ankyrin repeat domain-containing protein 13B (626 aa).

Position 1 is an N-acetylmethionine (methionine 1). ANK repeat units follow at residues arginine 47–arginine 76 and serine 80–valine 109. Residues proline 442–arginine 474 are disordered. Over residues serine 449–serine 472 the composition is skewed to low complexity. One can recognise a UIM 1 domain in the interval aspartate 503 to glutamate 522. 2 disordered regions span residues asparagine 534–leucine 590 and glutamate 595–glutamate 614. The span at proline 554–serine 573 shows a compositional bias: pro residues. UIM domains lie at serine 585–arginine 604 and glutamine 610–glutamine 626.

In terms of assembly, interacts with EGFR (ubiquitinated); the interaction is direct and may regulate EGFR internalization.

The protein resides in the cell membrane. The protein localises to the late endosome. It localises to the early endosome. Its function is as follows. Ubiquitin-binding protein that specifically recognizes and binds 'Lys-63'-linked ubiquitin. Does not bind 'Lys-48'-linked ubiquitin. Positively regulates the internalization of ligand-activated EGFR by binding to the Ub moiety of ubiquitinated EGFR at the cell membrane. This is Ankyrin repeat domain-containing protein 13B (ANKRD13B) from Homo sapiens (Human).